The sequence spans 146 residues: Acidic phospholipase A2 CM-II (146 aa).

The signal sequence occupies residues 1–21; that stretch reads MNPAHLLILAAVCVSPLGAFS. A propeptide spanning residues 22-27 is cleaved from the precursor; the sequence is NRPMPL. Intrachain disulfides connect Cys38–Cys98, Cys53–Cys145, Cys55–Cys71, Cys70–Cys126, Cys77–Cys119, Cys87–Cys112, and Cys105–Cys117. Residues Tyr54, Gly56, and Gly58 each coordinate Ca(2+). Residue His74 is part of the active site. Residue Asp75 coordinates Ca(2+). Asp120 is an active-site residue.

It belongs to the phospholipase A2 family. Group I subfamily. D49 sub-subfamily. Requires Ca(2+) as cofactor. In terms of tissue distribution, expressed by the venom gland.

The protein resides in the secreted. The enzyme catalyses a 1,2-diacyl-sn-glycero-3-phosphocholine + H2O = a 1-acyl-sn-glycero-3-phosphocholine + a fatty acid + H(+). Its function is as follows. PLA2 catalyzes the calcium-dependent hydrolysis of the 2-acyl groups in 3-sn-phosphoglycerides. Is able to suppress the acetylcholine (ACh)-evoked current mediated by alpha-7 (CHRNA7)-similar nAChRs in L.stagnalis neurons (IC(50)=37 nM) and to compete with alpha-bungarotoxin for binding to muscle- and alpha-7 neuronal nAChR types, as well as to AChBPs. In inhibition of alpha-bungarotoxin binding, this toxin is similarly active against T.californica nAChR (IC(50)=1.2 uM), human alpha-7 nAChR (IC(50)=3.2 uM), and L.stagnalis AChBP (IC(50)=1.0 uM), whereas it is not active against A.californica AChBP (IC(50)&gt;100 uM). This chain is Acidic phospholipase A2 CM-II, found in Naja kaouthia (Monocled cobra).